Reading from the N-terminus, the 351-residue chain is Phenoloxidase-activating factor 3 (351 aa).

A signal peptide spans 1–19 (MWLSLVILGVASAIVNVST). A glycan (N-linked (GlcNAc...) asparagine) is linked at N16. Residues 22 to 73 (SCTTPNGETATCLPIESCKIFWDYVVTSGADPEINSFLRASLCRQGNYVVCC) enclose the Clip domain. 8 disulfides stabilise this stretch: C23/C72, C33/C64, C39/C73, C89/C224, C127/C143, C167/C176, C268/C285, and C295/C326. Residues 97–350 (VLGGEDTDLG…HLDWIKQNVR (254 aa)) form the Peptidase S1 domain. Catalysis depends on H142, which acts as the Charge relay system. Residues E158, D160, A163, and D166 each contribute to the Ca(2+) site. D204 acts as the Charge relay system in catalysis. S299 (charge relay system) is an active-site residue.

Belongs to the peptidase S1 family. CLIP subfamily. In the active form, heterodimer of a light chain and a heavy chain; disulfide-linked. Post-translationally, proteolytically cleaved.

Its subcellular location is the secreted. With respect to regulation, cleavage of PPAF2 is Ca(2+)-independent. Inhibited by heparin. Serine endopeptidase which, by cleaving prophenoloxidase activating factor PPAF2, is required for the activation of the prophenoloxidase cascade probably following the recognition of pathogen-derived products. This chain is Phenoloxidase-activating factor 3, found in Holotrichia diomphalia (Korean black chafer).